The chain runs to 148 residues: Transcriptional regulator MraZ (148 aa).

2 consecutive SpoVT-AbrB domains span residues 5 to 51 (ATSL…PLPA) and 80 to 123 (AEDV…SMEA).

This sequence belongs to the MraZ family. In terms of assembly, forms oligomers.

It is found in the cytoplasm. The protein localises to the nucleoid. The polypeptide is Transcriptional regulator MraZ (Methylobacillus flagellatus (strain ATCC 51484 / DSM 6875 / VKM B-1610 / KT)).